Reading from the N-terminus, the 445-residue chain is C-terminal-binding protein 2 (445 aa).

The residue at position 22 (R22) is an Asymmetric dimethylarginine. Residues S106, 186–191, D210, 243–249, 270–272, and D296 each bind NAD(+); these read IGFGRT, CNLNEHN, and AAR. R272 is an active-site residue. The active site involves E301. H321 functions as the Proton donor in the catalytic mechanism. 321-324 provides a ligand contact to NAD(+); that stretch reads HTAW. A disordered region spans residues 414–445; sequence THNLPTVAHPSQAPSPNQPTKHGDNREHPNEQ. S428 bears the Phosphoserine; by HIPK2 mark. Basic and acidic residues predominate over residues 434–445; sequence KHGDNREHPNEQ.

It belongs to the D-isomer specific 2-hydroxyacid dehydrogenase family. In terms of assembly, interacts with HIPK2 and PNN. Interacts with the transcription factors ZNF217, BKLF, delta EF1/AREB6/ZEB, EVI-1 and Friend of GATA (FOG) via the consensus motif P-X-[DNS]-L-[STVA]. Also interacts with the C-terminus of adenovirus E1A protein. Can form a complex with BKLF on a CACCC-box oligonucleotide. Can form homodimers or heterodimers of CTBP1 and CTBP2. Interacts with NRIP1 and WIZ. Interacts with PRDM16; represses white adipose tissue (WAT)-specific genes expression. Interacts with MCRIP1. Phosphorylation by HIPK2 on Ser-428 induces proteasomal degradation. In terms of tissue distribution, found in all tissues except spleen and liver.

It localises to the nucleus. The protein resides in the synapse. In terms of biological role, corepressor targeting diverse transcription regulators. Isoform 2 probably acts as a scaffold for specialized synapses. Functions in brown adipose tissue (BAT) differentiation. The polypeptide is C-terminal-binding protein 2 (Ctbp2) (Mus musculus (Mouse)).